Consider the following 261-residue polypeptide: MVDSLATVWLIGGTVDSRAVAEGLIAQGINCLVTVTTSEAKHLYPIHQCLTVHVGALTPQEIPKFLKRHSIAVIVDASHPFAAQITTTVTAIAKEQQIPYIRFERPPLALGKNTLEVPDIQSLTRGKYQPYLRGKRVLLTVGARWLSHFSLLQDEAVLFARILPYPQALAQAIAAGFTSDRIIALRPPVAEPLEKALWQQWQIQGVVTKASGAQGGELVKQKVAEALGVNLIRIARPQTIPGQITDDLSQINQFCQRHLPS.

This sequence belongs to the precorrin-6x reductase family.

It carries out the reaction Co-precorrin-6B + NAD(+) = Co-precorrin-6A + NADH + H(+). It participates in cofactor biosynthesis; adenosylcobalamin biosynthesis; cob(II)yrinate a,c-diamide from sirohydrochlorin (anaerobic route): step 7/10. In terms of biological role, catalyzes the reduction of the macrocycle of cobalt-precorrin-6A to cobalt-precorrin-6B. The protein is Cobalt-precorrin-6A reductase (cbiJ) of Synechocystis sp. (strain ATCC 27184 / PCC 6803 / Kazusa).